The chain runs to 208 residues: Elongation factor Ts, chloroplastic (208 aa).

The protein belongs to the EF-Ts family.

Its subcellular location is the plastid. It localises to the chloroplast. In terms of biological role, associates with the EF-Tu.GDP complex and induces the exchange of GDP to GTP. It remains bound to the aminoacyl-tRNA.EF-Tu.GTP complex up to the GTP hydrolysis stage on the ribosome. This Cyanidium caldarium (Red alga) protein is Elongation factor Ts, chloroplastic (tsf).